The sequence spans 294 residues: Chelated iron transport system membrane protein YfeC (294 aa).

8 consecutive transmembrane segments (helical) span residues 17–37 (AIWVSAIVGAVCAFLSAYLML), 51–71 (VVPGVAGAYALGFPYAAGAFF), 93–113 (AIIGFIFSTFFAVGLLIVSLN), 140–160 (IIILVSFVILCLIWKDLLAVF), 169–189 (IGLSPLRLKILFFTLLSACTV), 194–214 (TVGAILVIAMVVTPGATAYLL), 221–241 (LLIIAIAIGAITSAFGAYLSF), and 246–266 (ATGGVIVTLQTLVFLPAFFFA).

It belongs to the ABC-3 integral membrane protein family.

Its subcellular location is the cell inner membrane. Functionally, part of an ATP-driven transport system YfeABC for chelated iron. This Yersinia pestis protein is Chelated iron transport system membrane protein YfeC (yfeC).